Reading from the N-terminus, the 433-residue chain is Cell division protein FtsZ homolog 1, chloroplastic (433 aa).

A chloroplast-targeting transit peptide spans 1 to 66 (MAIIPLAQLN…TRSKSMRLRC (66 aa)). The residue at position 67 (Ser67) is an N-acetylserine. GTP is bound by residues 83–87 (GGGNN), 170–172 (GTG), Glu201, Arg205, and Asp249. The disordered stretch occupies residues 399–433 (GSSGQQENKGMSLPHQKQSPSTISTKSSSPRRLFF). The span at 414 to 433 (QKQSPSTISTKSSSPRRLFF) shows a compositional bias: low complexity.

It belongs to the FtsZ family. Aggregates to form a contractile ring-like structure; contraction of the ring was accompanied by an increase in the filament turnover rate. This aggregation is regulated in midchloroplast stroma by MIND1 (repressor) and MINE1 (promoter). Self-interacts and binds to FTSZ2-1 in heteromers to form two morphologically distinct types of filaments, termed type-I (smooth filaments) and type-II (rough filaments), in a GTP-dependent manner. Interacts with ARC3. Part of a complex made of ARC3, ARC6, FTSZ1 and FTSZ2. As to expression, in pollen grain, restricted to plastids of vegetative cells. Also present in pollen tubes plastids.

Its subcellular location is the plastid. It localises to the chloroplast stroma. It is found in the chloroplast thylakoid membrane. Exhibits GTPase activity. Component of the plastid division machinery that forms a contractile ring at the division site. Required for plastid division in a dose-dependent manner. Involved in epidermal plastids division in a MINE1-dependent manner. Involved in blue light-induced chloroplast movements. May regulate thylakoid development. In the vegetative shoot apex, at the shoot apical meristem (SAM), where the proplastid-to-chloroplast transition takes place, contributes equally with FTSZ2-1 in the L2 layer to plastid division. In Arabidopsis thaliana (Mouse-ear cress), this protein is Cell division protein FtsZ homolog 1, chloroplastic.